A 96-amino-acid polypeptide reads, in one-letter code: Cytochrome c2 iso-2 (96 aa).

Heme c contacts are provided by cysteine 10, cysteine 13, histidine 14, and methionine 75.

It belongs to the cytochrome c family. Binds 1 heme c group covalently per subunit.

In terms of biological role, cytochrome c2 is found mainly in purple, non-sulfur, photosynthetic bacteria where it functions as the electron donor to the oxidized bacteriochlorophyll in the photophosphorylation pathway. However, it may also have a role in the respiratory chain and is found in some non-photosynthetic bacteria. This Magnetospirillum fulvum (Rhodospirillum fulvum) protein is Cytochrome c2 iso-2.